The chain runs to 457 residues: Glutamate--tRNA ligase 2 (457 aa).

The 'HIGH' region signature appears at 9 to 19 (PSPTGRIHIGN). A 'KMSKS' region motif is present at residues 250–254 (GLSKR). Lysine 253 provides a ligand contact to ATP.

The protein belongs to the class-I aminoacyl-tRNA synthetase family. Glutamate--tRNA ligase type 1 subfamily. Monomer.

It is found in the cytoplasm. It carries out the reaction tRNA(Glu) + L-glutamate + ATP = L-glutamyl-tRNA(Glu) + AMP + diphosphate. Catalyzes the attachment of glutamate to tRNA(Glu) in a two-step reaction: glutamate is first activated by ATP to form Glu-AMP and then transferred to the acceptor end of tRNA(Glu). This Mesorhizobium japonicum (strain LMG 29417 / CECT 9101 / MAFF 303099) (Mesorhizobium loti (strain MAFF 303099)) protein is Glutamate--tRNA ligase 2.